Here is a 439-residue protein sequence, read N- to C-terminus: Microfibrillar-associated protein 1A (439 aa).

The interval 1 to 200 (MSVPSALMKQ…SEDEMEPRLK (200 aa)) is disordered. Position 2 is an N-acetylserine (Ser2). Residues 23–34 (RNEKGEISMEKV) show a composition bias toward basic and acidic residues. Phosphoserine occurs at positions 52 and 53. Residues 61-70 (QFIKKAKEQE) show a composition bias toward basic and acidic residues. Residue Lys67 forms a Glycyl lysine isopeptide (Lys-Gly) (interchain with G-Cter in SUMO2) linkage. The span at 71-81 (AEPEEQEEDSS) shows a compositional bias: acidic residues. 5 positions are modified to phosphoserine: Ser94, Ser116, Ser118, Ser132, and Ser133. Acidic residues-rich tracts occupy residues 112-122 (VVGESDSEVEG) and 131-144 (DSSE…DDEE). Residues 145–163 (IERRRGMMRQRAQERKNEE) show a composition bias toward basic and acidic residues. Residues 178–195 (ESESESEYEEYTDSEDEM) are compositionally biased toward acidic residues. A Glycyl lysine isopeptide (Lys-Gly) (interchain with G-Cter in SUMO2) cross-link involves residue Lys249. Thr267 carries the phosphothreonine modification. A Glycyl lysine isopeptide (Lys-Gly) (interchain with G-Cter in SUMO2) cross-link involves residue Lys357. Ser361 carries the phosphoserine modification. Glycyl lysine isopeptide (Lys-Gly) (interchain with G-Cter in SUMO2) cross-links involve residues Lys371, Lys381, Lys415, and Lys418. Position 432 is a phosphoserine (Ser432).

It belongs to the MFAP1 family. Component of the spliceosome B complex. Interacts with PRPF38A (via N-terminal interaction domain).

It localises to the nucleus. Functionally, involved in pre-mRNA splicing as a component of the spliceosome. In Mus musculus (Mouse), this protein is Microfibrillar-associated protein 1A.